The following is a 400-amino-acid chain: Probable succinyl-diaminopimelate desuccinylase (400 aa).

Histidine 72 serves as a coordination point for Zn(2+). Aspartate 74 is a catalytic residue. Aspartate 105 serves as a coordination point for Zn(2+). Glutamate 139 acts as the Proton acceptor in catalysis. Zn(2+)-binding residues include glutamate 140, glutamate 165, and histidine 378.

It belongs to the peptidase M20A family. The cofactor is Zn(2+). Requires Co(2+) as cofactor.

The catalysed reaction is N-succinyl-(2S,6S)-2,6-diaminopimelate + H2O = (2S,6S)-2,6-diaminopimelate + succinate. It participates in amino-acid biosynthesis; L-lysine biosynthesis via DAP pathway; LL-2,6-diaminopimelate from (S)-tetrahydrodipicolinate (succinylase route): step 3/3. This is Probable succinyl-diaminopimelate desuccinylase (dapE) from Staphylococcus aureus (strain Mu50 / ATCC 700699).